A 359-amino-acid chain; its full sequence is Peptide chain release factor 1 (359 aa).

The residue at position 236 (glutamine 236) is an N5-methylglutamine. The disordered stretch occupies residues lysine 286–serine 305.

It belongs to the prokaryotic/mitochondrial release factor family. Post-translationally, methylated by PrmC. Methylation increases the termination efficiency of RF1.

It is found in the cytoplasm. Functionally, peptide chain release factor 1 directs the termination of translation in response to the peptide chain termination codons UAG and UAA. This Wolbachia pipientis wMel protein is Peptide chain release factor 1.